A 185-amino-acid chain; its full sequence is Peroxynitrite isomerase (185 aa).

Positions 1–21 are disordered; that stretch reads MHHPARELPFPDALRPGARPA. Residues 34-40 carry the GXWXGXG motif; sequence GTWRGTG. A heme b-binding site is contributed by His-171.

Belongs to the nitrobindin family. In terms of assembly, homodimer. Heme b is required as a cofactor.

It carries out the reaction peroxynitrite = nitrate. Its pathway is nitrogen metabolism. Functionally, heme-binding protein able to scavenge peroxynitrite and to protect free L-tyrosine against peroxynitrite-mediated nitration, by acting as a peroxynitrite isomerase that converts peroxynitrite to nitrate. Therefore, this protein likely plays a role in peroxynitrite sensing and in the detoxification of reactive nitrogen and oxygen species (RNS and ROS, respectively). Is able to bind nitric oxide (NO) in vitro, but may act as a sensor of peroxynitrite levels in vivo. The chain is Peroxynitrite isomerase from Streptomyces griseus subsp. griseus (strain JCM 4626 / CBS 651.72 / NBRC 13350 / KCC S-0626 / ISP 5235).